Reading from the N-terminus, the 112-residue chain is Nucleoid-associated protein BCI_0116 (112 aa).

It belongs to the YbaB/EbfC family. Homodimer.

Its subcellular location is the cytoplasm. The protein localises to the nucleoid. Functionally, binds to DNA and alters its conformation. May be involved in regulation of gene expression, nucleoid organization and DNA protection. In Baumannia cicadellinicola subsp. Homalodisca coagulata, this protein is Nucleoid-associated protein BCI_0116.